The sequence spans 124 residues: LOB domain-containing protein 9 (124 aa).

The LOB domain maps to 11-113 (APCALCTTKN…IYLNELKEKI (103 aa)).

The protein belongs to the LOB domain-containing protein family.

In Arabidopsis thaliana (Mouse-ear cress), this protein is LOB domain-containing protein 9 (LBD9).